Consider the following 512-residue polypeptide: MVPTGQVAEKQAYEEPRQDHELKSWRCLVFYLCFFGFMAQLRPGESFITPFLLERKFTKEQVTNEIIPMLPYSHLAVLVPVFLLTDYLRYKPVLVLQCLSFVCVWLLLLLGTSVVHMQLMEVFYSVTMAARIAYSSYIFSLVHPSRYQRMASYSRAAVLLGVFISSVLGQALVTVGHISTYTLNCVSLGFILFSLVLSLFLKRPKRSLFFNRSTLARGALPCELDQMHPGPDRPETRKLDRMLGTCRDSFLVRMLSELVENARQPQLRLWCLWWVFNSSGYYLITYYVHVLWRSTDSSLSYNGAVDAASTLLSAITSFSAGFLSIRWTLWSKLVIAGVIAIQASLVFCMFQIRDIWVCYVTFVLFRGAYQFLVPIATFQIASSLSKELCALVFGINTFLATALKTCITLVVSDKRGLGLQVRDQFRIYFIYFLMLSITCFAWAGLDGLRYCQRGRHQPLAQAQELRSPLETSVQAISLQDGDLRGPQPSAPQLLSEDGMEDDRGDLRVEAKA.

M1 bears the N-acetylmethionine mark. The Cytoplasmic portion of the chain corresponds to 1 to 29 (MVPTGQVAEKQAYEEPRQDHELKSWRCLV). Residues 30 to 50 (FYLCFFGFMAQLRPGESFITP) traverse the membrane as a helical segment. Folate contacts are provided by I48 and T49. The Extracellular portion of the chain corresponds to 51–62 (FLLERKFTKEQV). Residues 63-85 (TNEIIPMLPYSHLAVLVPVFLLT) traverse the membrane as a helical segment. Over 86-89 (DYLR) the chain is Cytoplasmic. The helical transmembrane segment at 90–110 (YKPVLVLQCLSFVCVWLLLLL) threads the bilayer. The Extracellular segment spans residues 111-114 (GTSV). A helical transmembrane segment spans residues 115 to 137 (VHMQLMEVFYSVTMAARIAYSSY). Residues E121 and R131 each coordinate folate. The Cytoplasmic segment spans residues 138–151 (IFSLVHPSRYQRMA). The helical transmembrane segment at 152–176 (SYSRAAVLLGVFISSVLGQALVTVG) threads the bilayer. V162 contributes to the folate binding site. Over 177–181 (HISTY) the chain is Extracellular. Residues 182–200 (TLNCVSLGFILFSLVLSLF) traverse the membrane as a helical segment. The Cytoplasmic segment spans residues 201–266 (LKRPKRSLFF…ELVENARQPQ (66 aa)). A helical transmembrane segment spans residues 267-292 (LRLWCLWWVFNSSGYYLITYYVHVLW). Positions 281, 282, and 286 each coordinate folate. At 293 to 300 (RSTDSSLS) the chain is on the extracellular side. A helical transmembrane segment spans residues 301 to 323 (YNGAVDAASTLLSAITSFSAGFL). Topologically, residues 324–329 (SIRWTL) are cytoplasmic. A helical membrane pass occupies residues 330 to 350 (WSKLVIAGVIAIQASLVFCMF). Over 351–353 (QIR) the chain is Extracellular. A helical transmembrane segment spans residues 354-377 (DIWVCYVTFVLFRGAYQFLVPIAT). Residues R366 and Q370 each coordinate folate. The Cytoplasmic segment spans residues 378–391 (FQIASSLSKELCAL). The helical transmembrane segment at 392–415 (VFGINTFLATALKTCITLVVSDKR) threads the bilayer. The interval 400–412 (ATALKTCITLVVS) is required for substrate-binding. At 416 to 423 (GLGLQVRD) the chain is on the extracellular side. A helical membrane pass occupies residues 424–448 (QFRIYFIYFLMLSITCFAWAGLDGL). The Cytoplasmic portion of the chain corresponds to 449-512 (RYCQRGRHQP…RGDLRVEAKA (64 aa)). Phosphoserine is present on residues S467, S472, and S477. Positions 478-512 (LQDGDLRGPQPSAPQLLSEDGMEDDRGDLRVEAKA) are disordered.

Belongs to the reduced folate carrier (RFC) transporter (TC 2.A.48) family.

It localises to the cell membrane. It is found in the apical cell membrane. The protein resides in the basolateral cell membrane. The enzyme catalyses 5-amino-1-(5-phospho-beta-D-ribosyl)imidazole-4-carboxamide(in) + (6S)-5-methyl-5,6,7,8-tetrahydrofolate(out) = 5-amino-1-(5-phospho-beta-D-ribosyl)imidazole-4-carboxamide(out) + (6S)-5-methyl-5,6,7,8-tetrahydrofolate(in). Its function is as follows. Antiporter that mediates the import of reduced folates, driven by the export of organic anions. Also acts as an importer of immunoreactive cyclic dinucleotides, but with a lower transporter activity. Mechanistically, acts as a secondary active transporter, which exports intracellular organic anions down their concentration gradients to facilitate the uptake of its substrates. Has high affinity for N5-methyltetrahydrofolate, the predominant circulating form of folate. Also mediates the import of antifolate drug methotrexate. 5-amino-4-imidazolecarboxamide riboside (AICAR), when phosphorylated to AICAR monophosphate, can serve as an organic anion for antiporter activity. The polypeptide is Reduced folate transporter (Mus musculus (Mouse)).